The chain runs to 132 residues: Small ribosomal subunit protein uS15 (132 aa).

This sequence belongs to the universal ribosomal protein uS15 family. Part of the 30S ribosomal subunit.

This is Small ribosomal subunit protein uS15 from Methanobrevibacter smithii (strain ATCC 35061 / DSM 861 / OCM 144 / PS).